A 589-amino-acid chain; its full sequence is Phenylalanine--tRNA ligase beta subunit (589 aa).

The B5 domain occupies 302–379; it reads LPYRKEMVRA…IAYGYNNIQM (78 aa). Positions 357, 363, 366, and 367 each coordinate Mg(2+).

Belongs to the phenylalanyl-tRNA synthetase beta subunit family. Type 2 subfamily. In terms of assembly, heterotetramer; dimer of two heterodimers formed by FARSA and FARSB. Mg(2+) serves as cofactor.

It is found in the cytoplasm. The catalysed reaction is tRNA(Phe) + L-phenylalanine + ATP = L-phenylalanyl-tRNA(Phe) + AMP + diphosphate + H(+). This Mus musculus (Mouse) protein is Phenylalanine--tRNA ligase beta subunit (Farsb).